We begin with the raw amino-acid sequence, 750 residues long: Photosystem I P700 chlorophyll a apoprotein A1 (750 aa).

8 consecutive transmembrane segments (helical) span residues 70-93 (VFSAHFGQLSIIFLWLSGMYFHGA), 156-179 (LYCTAIGALIFAALMLFAGWFHYH), 195-219 (LNHHLAGLLGLGSLSWAGHQIHVSL), 291-309 (IAHHHLAIAILFLIAGHMY), 346-369 (WHAQLSLNLAMLGSTTIVVAHHMY), 385-411 (LSLFTHHMWIGGFLIVGAAAHAAIFMV), 433-455 (AIISHLNWVCIFLGFHSFGLYIH), and 531-549 (FLVHHIHAFTIHVTVLILL). [4Fe-4S] cluster is bound by residues Cys573 and Cys582. 2 helical membrane-spanning segments follow: residues 589–610 (HVFLGLFWMYNAISVVIFHFSW) and 664–686 (LSAYGLFFLGAHFVWAFSLMFLF). Position 675 (His675) interacts with chlorophyll a'. Chlorophyll a contacts are provided by Met683 and Tyr691. Residue Trp692 coordinates phylloquinone. The helical transmembrane segment at 724 to 744 (AVGVTHYLLGGIATTWAFFLA) threads the bilayer.

The protein belongs to the PsaA/PsaB family. As to quaternary structure, the PsaA/B heterodimer binds the P700 chlorophyll special pair and subsequent electron acceptors. PSI consists of a core antenna complex that captures photons, and an electron transfer chain that converts photonic excitation into a charge separation. The eukaryotic PSI reaction center is composed of at least 11 subunits. Requires P700 is a chlorophyll a/chlorophyll a' dimer, A0 is one or more chlorophyll a, A1 is one or both phylloquinones and FX is a shared 4Fe-4S iron-sulfur center. as cofactor.

Its subcellular location is the plastid. The protein localises to the chloroplast thylakoid membrane. The catalysed reaction is reduced [plastocyanin] + hnu + oxidized [2Fe-2S]-[ferredoxin] = oxidized [plastocyanin] + reduced [2Fe-2S]-[ferredoxin]. Its function is as follows. PsaA and PsaB bind P700, the primary electron donor of photosystem I (PSI), as well as the electron acceptors A0, A1 and FX. PSI is a plastocyanin-ferredoxin oxidoreductase, converting photonic excitation into a charge separation, which transfers an electron from the donor P700 chlorophyll pair to the spectroscopically characterized acceptors A0, A1, FX, FA and FB in turn. Oxidized P700 is reduced on the lumenal side of the thylakoid membrane by plastocyanin. The protein is Photosystem I P700 chlorophyll a apoprotein A1 of Agrostis stolonifera (Creeping bentgrass).